The sequence spans 555 residues: Dihydroxy-acid dehydratase (555 aa).

Aspartate 78 contributes to the Mg(2+) binding site. [2Fe-2S] cluster is bound at residue cysteine 119. Residues aspartate 120 and lysine 121 each contribute to the Mg(2+) site. At lysine 121 the chain carries N6-carboxylysine. Cysteine 195 is a binding site for [2Fe-2S] cluster. Position 444 (glutamate 444) interacts with Mg(2+). Serine 470 functions as the Proton acceptor in the catalytic mechanism.

This sequence belongs to the IlvD/Edd family. In terms of assembly, homodimer. The cofactor is [2Fe-2S] cluster. Mg(2+) is required as a cofactor.

It carries out the reaction (2R)-2,3-dihydroxy-3-methylbutanoate = 3-methyl-2-oxobutanoate + H2O. The enzyme catalyses (2R,3R)-2,3-dihydroxy-3-methylpentanoate = (S)-3-methyl-2-oxopentanoate + H2O. It functions in the pathway amino-acid biosynthesis; L-isoleucine biosynthesis; L-isoleucine from 2-oxobutanoate: step 3/4. It participates in amino-acid biosynthesis; L-valine biosynthesis; L-valine from pyruvate: step 3/4. Its function is as follows. Functions in the biosynthesis of branched-chain amino acids. Catalyzes the dehydration of (2R,3R)-2,3-dihydroxy-3-methylpentanoate (2,3-dihydroxy-3-methylvalerate) into 2-oxo-3-methylpentanoate (2-oxo-3-methylvalerate) and of (2R)-2,3-dihydroxy-3-methylbutanoate (2,3-dihydroxyisovalerate) into 2-oxo-3-methylbutanoate (2-oxoisovalerate), the penultimate precursor to L-isoleucine and L-valine, respectively. The polypeptide is Dihydroxy-acid dehydratase (Dehalococcoides mccartyi (strain CBDB1)).